The primary structure comprises 258 residues: D-beta-hydroxybutyrate dehydrogenase (258 aa).

NAD(+) is bound at residue 8-32 (LVTGSTSGIGLGIAKALAAQGANII). Residue Ser140 coordinates substrate. Tyr153 functions as the Proton acceptor in the catalytic mechanism.

It belongs to the short-chain dehydrogenases/reductases (SDR) family.

It carries out the reaction (R)-3-hydroxybutanoate + NAD(+) = acetoacetate + NADH + H(+). The protein is D-beta-hydroxybutyrate dehydrogenase (hbdH1) of Cupriavidus necator (strain ATCC 17699 / DSM 428 / KCTC 22496 / NCIMB 10442 / H16 / Stanier 337) (Ralstonia eutropha).